The following is a 307-amino-acid chain: Mitochondrial brown fat uncoupling protein 1 (307 aa).

Residues 1 to 10 lie on the Mitochondrial intermembrane side of the membrane; it reads MVSSTTSEVQ. Residues 11 to 32 form a helical membrane-spanning segment; sequence PTMGVKIFSAGVSACLADIITF. Solcar repeat units lie at residues 11-102, 111-201, and 210-295; these read PTMG…VQEY, ASLG…MKGA, and DDVP…LKKE. At 33–73 the chain is on the mitochondrial matrix side; that stretch reads PLDTAKVRLQIQGEGQASSTIRYKGVLGTITTLAKTEGLPK. Lys56 is a fatty acid 16:0 binding site. Residues 74–96 form a helical membrane-spanning segment; it reads LYSGLPAGIQRQISFASLRIGLY. Over 97 to 116 the chain is Mitochondrial intermembrane; that stretch reads DTVQEYFSSGRETPASLGSK. Residues 117–133 form a helical membrane-spanning segment; the sequence is ISAGLMTGGVAVFIGQP. Over 134-178 the chain is Mitochondrial matrix; the sequence is TEVVKVRMQAQSHLHGIKPRYTGTYNAYRVIATTESLSTLWKGTT. The chain crosses the membrane as a helical span at residues 179–195; it reads PNLMRNVIINCTELVTY. The Mitochondrial intermembrane segment spans residues 196 to 212; that stretch reads DLMKGALVNHHILADDV. The chain crosses the membrane as a helical span at residues 213-232; it reads PCHLLSALVAGFCTTLLASP. Topologically, residues 233–266 are mitochondrial matrix; it reads VDVVKTRFINSLPGQYPSVPSCAMTMYTKEGPAA. Cys254 carries the post-translational modification Cysteine sulfenic acid (-SOH). A helical transmembrane segment spans residues 267–289; it reads FFKGFAPSFLRLGSWNVIMFVCF. Position 269 (Lys269) interacts with fatty acid 16:0. The Mitochondrial intermembrane portion of the chain corresponds to 290 to 307; sequence EQLKKELMKSRQTVDCTT.

This sequence belongs to the mitochondrial carrier (TC 2.A.29) family. As to quaternary structure, most probably functions as a monomer. Binds one purine nucleotide per monomer. However, has also been suggested to function as a homodimer or a homotetramer. Tightly associates with cardiolipin in the mitochondrion inner membrane; may stabilize and regulate its activity. In terms of processing, may undergo ubiquitin-mediated proteasomal degradation. May undergo sulfenylation upon cold exposure. May increase the sensitivity of UCP1 thermogenic function to the activation by noradrenaline probably through structural effects. In terms of tissue distribution, brown adipose tissue.

It localises to the mitochondrion inner membrane. The catalysed reaction is H(+)(in) = H(+)(out). With respect to regulation, has no constitutive proton transporter activity and has to be activated by long-chain fatty acids/LCFAs. Inhibited by purine nucleotides. Both purine nucleotides and LCFAs bind the cytosolic side of the transporter and directly compete to activate or inhibit it. Activated by noradrenaline and reactive oxygen species. Despite lacking canonical translational encoding for selenocysteine, a small pool of the protein has been observed to selectively incorporate selenocysteine at 'Cys-254'. Selenocysteine-modified protein is highly sensitive to redox modification and may constitute a pool of protein highly sensitive to activation by elevated levels of reactive oxygen species (ROS). Functionally, mitochondrial protein responsible for thermogenic respiration, a specialized capacity of brown adipose tissue and beige fat that participates in non-shivering adaptive thermogenesis to temperature and diet variations and more generally to the regulation of energy balance. Functions as a long-chain fatty acid/LCFA and proton symporter, simultaneously transporting one LCFA and one proton through the inner mitochondrial membrane. However, LCFAs remaining associated with the transporter via their hydrophobic tails, it results in an apparent transport of protons activated by LCFAs. Thereby, dissipates the mitochondrial proton gradient and converts the energy of substrate oxydation into heat instead of ATP. Regulates the production of reactive oxygen species/ROS by mitochondria. The chain is Mitochondrial brown fat uncoupling protein 1 from Rattus norvegicus (Rat).